The sequence spans 127 residues: Small ribosomal subunit protein uS11 (127 aa).

This sequence belongs to the universal ribosomal protein uS11 family. In terms of assembly, part of the 30S ribosomal subunit.

Functionally, located on the platform of the 30S subunit. This Natronomonas pharaonis (strain ATCC 35678 / DSM 2160 / CIP 103997 / JCM 8858 / NBRC 14720 / NCIMB 2260 / Gabara) (Halobacterium pharaonis) protein is Small ribosomal subunit protein uS11.